The primary structure comprises 158 residues: Sporulation-delaying protein SdpA (158 aa).

It is found in the cytoplasm. Its function is as follows. Required for the maturation of SdpC to SDP. Not required for SdpC signal peptide cleavage, secretion from the cell or disulfide bond formation. This Bacillus subtilis (strain 168) protein is Sporulation-delaying protein SdpA.